The following is a 473-amino-acid chain: Tryptophanase (473 aa).

An N6-(pyridoxal phosphate)lysine modification is found at lysine 270.

The protein belongs to the beta-eliminating lyase family. As to quaternary structure, homotetramer. Requires pyridoxal 5'-phosphate as cofactor.

It catalyses the reaction L-tryptophan + H2O = indole + pyruvate + NH4(+). It participates in amino-acid degradation; L-tryptophan degradation via pyruvate pathway; indole and pyruvate from L-tryptophan: step 1/1. This chain is Tryptophanase, found in Vibrio vulnificus (strain CMCP6).